The chain runs to 180 residues: Major urinary protein 5 (180 aa).

The first 18 residues, 1-18 (MKLLLLLCLELTLVYVHA), serve as a signal peptide directing secretion. The cysteines at positions 82 and 175 are disulfide-linked.

It belongs to the calycin superfamily. Lipocalin family.

It is found in the secreted. Its function is as follows. Major urinary proteins (Mups) bind pheromones, and thus stabilize them to allow slow release into the air from urine marks. May protect pheromones from oxidation. May also act as pheromones themselves. In this context, they play a role in the regulation of social behaviors, such as aggression, mating, pup-suckling, territory establishment and dominance. This Mus musculus (Mouse) protein is Major urinary protein 5.